A 366-amino-acid polypeptide reads, in one-letter code: DNA polymerase IV (366 aa).

Residues 6-197 (IIHVDMDYFY…LKVSKLWGIG (192 aa)) form the UmuC domain. Residues aspartate 10 and aspartate 114 each coordinate Mg(2+). Glutamate 115 is a catalytic residue.

It belongs to the DNA polymerase type-Y family. As to quaternary structure, monomer. The cofactor is Mg(2+).

The protein localises to the cytoplasm. The catalysed reaction is DNA(n) + a 2'-deoxyribonucleoside 5'-triphosphate = DNA(n+1) + diphosphate. Its function is as follows. Poorly processive, error-prone DNA polymerase involved in untargeted mutagenesis. Copies undamaged DNA at stalled replication forks, which arise in vivo from mismatched or misaligned primer ends. These misaligned primers can be extended by PolIV. Exhibits no 3'-5' exonuclease (proofreading) activity. May be involved in translesional synthesis. This is DNA polymerase IV from Methanosarcina acetivorans (strain ATCC 35395 / DSM 2834 / JCM 12185 / C2A).